Reading from the N-terminus, the 120-residue chain is NAD(P)H-quinone oxidoreductase subunit 3, chloroplastic (120 aa).

The next 3 membrane-spanning stretches (helical) occupy residues 9–29 (IFWA…LISG), 64–84 (MFAL…PWAM), and 88–108 (VLGV…ILGL).

Belongs to the complex I subunit 3 family. In terms of assembly, NDH is composed of at least 16 different subunits, 5 of which are encoded in the nucleus.

It is found in the plastid. The protein localises to the chloroplast thylakoid membrane. It catalyses the reaction a plastoquinone + NADH + (n+1) H(+)(in) = a plastoquinol + NAD(+) + n H(+)(out). The enzyme catalyses a plastoquinone + NADPH + (n+1) H(+)(in) = a plastoquinol + NADP(+) + n H(+)(out). NDH shuttles electrons from NAD(P)H:plastoquinone, via FMN and iron-sulfur (Fe-S) centers, to quinones in the photosynthetic chain and possibly in a chloroplast respiratory chain. The immediate electron acceptor for the enzyme in this species is believed to be plastoquinone. Couples the redox reaction to proton translocation, and thus conserves the redox energy in a proton gradient. This Draba nemorosa (Woodland whitlowgrass) protein is NAD(P)H-quinone oxidoreductase subunit 3, chloroplastic.